The following is a 147-amino-acid chain: D-aminoacyl-tRNA deacylase (147 aa).

A Gly-cisPro motif, important for rejection of L-amino acids motif is present at residues 136 to 137 (GP).

This sequence belongs to the DTD family. Homodimer.

It localises to the cytoplasm. It catalyses the reaction glycyl-tRNA(Ala) + H2O = tRNA(Ala) + glycine + H(+). The enzyme catalyses a D-aminoacyl-tRNA + H2O = a tRNA + a D-alpha-amino acid + H(+). In terms of biological role, an aminoacyl-tRNA editing enzyme that deacylates mischarged D-aminoacyl-tRNAs. Also deacylates mischarged glycyl-tRNA(Ala), protecting cells against glycine mischarging by AlaRS. Acts via tRNA-based rather than protein-based catalysis; rejects L-amino acids rather than detecting D-amino acids in the active site. By recycling D-aminoacyl-tRNA to D-amino acids and free tRNA molecules, this enzyme counteracts the toxicity associated with the formation of D-aminoacyl-tRNA entities in vivo and helps enforce protein L-homochirality. The sequence is that of D-aminoacyl-tRNA deacylase from Streptococcus pneumoniae (strain P1031).